The chain runs to 348 residues: Dihydroorotase (348 aa).

Positions 13 and 15 each coordinate Zn(2+). Substrate is bound by residues 15-17 (HLR) and asparagine 41. Positions 99, 136, and 174 each coordinate Zn(2+). Lysine 99 bears the N6-carboxylysine mark. Histidine 136 is a binding site for substrate. Leucine 219 serves as a coordination point for substrate. Residue aspartate 247 participates in Zn(2+) binding. Residue aspartate 247 is part of the active site. Substrate is bound by residues histidine 251 and alanine 263.

The protein belongs to the metallo-dependent hydrolases superfamily. DHOase family. Class II DHOase subfamily. Homodimer. Requires Zn(2+) as cofactor.

It catalyses the reaction (S)-dihydroorotate + H2O = N-carbamoyl-L-aspartate + H(+). Its pathway is pyrimidine metabolism; UMP biosynthesis via de novo pathway; (S)-dihydroorotate from bicarbonate: step 3/3. Catalyzes the reversible cyclization of carbamoyl aspartate to dihydroorotate. This is Dihydroorotase from Rhizobium etli (strain ATCC 51251 / DSM 11541 / JCM 21823 / NBRC 15573 / CFN 42).